Consider the following 256-residue polypeptide: DNA repair protein RecO (256 aa).

This sequence belongs to the RecO family.

Its function is as follows. Involved in DNA repair and RecF pathway recombination. This Streptococcus pneumoniae (strain Hungary19A-6) protein is DNA repair protein RecO.